The chain runs to 541 residues: Chaperonin GroEL (541 aa).

Residues 29–32 (TLGP), 86–90 (DGTTT), Gly413, 477–479 (DAL), and Asp493 each bind ATP.

Belongs to the chaperonin (HSP60) family. As to quaternary structure, forms a cylinder of 14 subunits composed of two heptameric rings stacked back-to-back. Interacts with the co-chaperonin GroES.

The protein resides in the cytoplasm. It carries out the reaction ATP + H2O + a folded polypeptide = ADP + phosphate + an unfolded polypeptide.. In terms of biological role, together with its co-chaperonin GroES, plays an essential role in assisting protein folding. The GroEL-GroES system forms a nano-cage that allows encapsulation of the non-native substrate proteins and provides a physical environment optimized to promote and accelerate protein folding. The chain is Chaperonin GroEL from Clostridium botulinum (strain Loch Maree / Type A3).